Here is a 758-residue protein sequence, read N- to C-terminus: DNA ligase (758 aa).

Residues 1 to 28 form a disordered region; it reads MPENFGAMRQDGLVSTSESDSPAPAATP. NAD(+)-binding positions include 60–64, 109–110, and E148; these read DAEFD and SL. The active-site N6-AMP-lysine intermediate is K150. R171, E208, K324, and K348 together coordinate NAD(+). C442, C445, C461, and C467 together coordinate Zn(2+). In terms of domain architecture, BRCT spans 660–749; sequence SVRRTLAGLT…PDHSAEAEEN (90 aa). The interval 735-758 is disordered; the sequence is LLAHGPDHSAEAEENESEGSTTND.

It belongs to the NAD-dependent DNA ligase family. LigA subfamily. Mg(2+) is required as a cofactor. Mn(2+) serves as cofactor.

The enzyme catalyses NAD(+) + (deoxyribonucleotide)n-3'-hydroxyl + 5'-phospho-(deoxyribonucleotide)m = (deoxyribonucleotide)n+m + AMP + beta-nicotinamide D-nucleotide.. DNA ligase that catalyzes the formation of phosphodiester linkages between 5'-phosphoryl and 3'-hydroxyl groups in double-stranded DNA using NAD as a coenzyme and as the energy source for the reaction. It is essential for DNA replication and repair of damaged DNA. The protein is DNA ligase of Renibacterium salmoninarum (strain ATCC 33209 / DSM 20767 / JCM 11484 / NBRC 15589 / NCIMB 2235).